Reading from the N-terminus, the 873-residue chain is Leucine--tRNA ligase (873 aa).

A 'HIGH' region motif is present at residues proline 42–histidine 52. A disordered region spans residues proline 624–proline 643. The short motif at lysine 632–serine 636 is the 'KMSKS' region element. Residue lysine 635 coordinates ATP.

The protein belongs to the class-I aminoacyl-tRNA synthetase family.

The protein resides in the cytoplasm. The catalysed reaction is tRNA(Leu) + L-leucine + ATP = L-leucyl-tRNA(Leu) + AMP + diphosphate. The sequence is that of Leucine--tRNA ligase from Pseudomonas aeruginosa (strain LESB58).